The following is a 171-amino-acid chain: Nucleoside-triphosphatase THEP1 (171 aa).

ATP contacts are provided by residues 8-15 and 95-102; these read GPPGAGKS and VYLIDEIG.

It belongs to the THEP1 NTPase family.

It carries out the reaction a ribonucleoside 5'-triphosphate + H2O = a ribonucleoside 5'-diphosphate + phosphate + H(+). In terms of biological role, has nucleotide phosphatase activity towards ATP, GTP, CTP, TTP and UTP. May hydrolyze nucleoside diphosphates with lower efficiency. The sequence is that of Nucleoside-triphosphatase THEP1 from Ignicoccus hospitalis (strain KIN4/I / DSM 18386 / JCM 14125).